The following is a 394-amino-acid chain: DNA replication and repair protein RecF (394 aa).

30 to 37 contacts ATP; it reads GRNGFGKT.

It belongs to the RecF family.

The protein localises to the cytoplasm. Its function is as follows. The RecF protein is involved in DNA metabolism; it is required for DNA replication and normal SOS inducibility. RecF binds preferentially to single-stranded, linear DNA. It also seems to bind ATP. This is DNA replication and repair protein RecF from Corynebacterium glutamicum (strain ATCC 13032 / DSM 20300 / JCM 1318 / BCRC 11384 / CCUG 27702 / LMG 3730 / NBRC 12168 / NCIMB 10025 / NRRL B-2784 / 534).